Consider the following 155-residue polypeptide: Ribosomal RNA large subunit methyltransferase H (155 aa).

S-adenosyl-L-methionine is bound by residues L72, G103, and 122 to 127 (FGRMVW).

Belongs to the RNA methyltransferase RlmH family. As to quaternary structure, homodimer.

The protein localises to the cytoplasm. It catalyses the reaction pseudouridine(1915) in 23S rRNA + S-adenosyl-L-methionine = N(3)-methylpseudouridine(1915) in 23S rRNA + S-adenosyl-L-homocysteine + H(+). Specifically methylates the pseudouridine at position 1915 (m3Psi1915) in 23S rRNA. This Paracoccus denitrificans (strain Pd 1222) protein is Ribosomal RNA large subunit methyltransferase H.